The primary structure comprises 660 residues: Protein translocase subunit SecA 2 (660 aa).

ATP contacts are provided by residues Gln113, 131 to 135 (GEGKT), and Asp539.

Belongs to the SecA family. In terms of assembly, monomer and homodimer. Part of the essential Sec protein translocation apparatus which comprises SecA, SecYEG and auxiliary proteins SecDF-YajC and YidC.

Its subcellular location is the cell inner membrane. It is found in the cytoplasm. It catalyses the reaction ATP + H2O + cellular proteinSide 1 = ADP + phosphate + cellular proteinSide 2.. In terms of biological role, part of the Sec protein translocase complex. Interacts with the SecYEG preprotein conducting channel. Has a central role in coupling the hydrolysis of ATP to the transfer of proteins into and across the cell membrane, serving both as a receptor for the preprotein-SecB complex and as an ATP-driven molecular motor driving the stepwise translocation of polypeptide chains across the membrane. The sequence is that of Protein translocase subunit SecA 2 from Bordetella avium (strain 197N).